The following is an 83-amino-acid chain: Putative snRNP Sm-like protein (83 aa).

The Sm domain occupies 9–81 (KPMDVLKNAL…VIFVSPSKGD (73 aa)).

This sequence belongs to the snRNP Sm proteins family.

The chain is Putative snRNP Sm-like protein from Thermoplasma volcanium (strain ATCC 51530 / DSM 4299 / JCM 9571 / NBRC 15438 / GSS1).